A 475-amino-acid polypeptide reads, in one-letter code: Sulfate adenylyltransferase subunit 1 (475 aa).

Residues 25-239 form the tr-type G domain; that stretch reads KSLLRFLTCG…EVLETVEIQR (215 aa). A G1 region spans residues 34–41; it reads GSVDDGKS. 34-41 lines the GTP pocket; that stretch reads GSVDDGKS. A G2 region spans residues 92–96; sequence GITID. The interval 113-116 is G3; it reads DTPG. Residues 113 to 117 and 168 to 171 contribute to the GTP site; these read DTPGH and NKMD. Positions 168–171 are G4; the sequence is NKMD. The interval 206-208 is G5; the sequence is SAL.

It belongs to the TRAFAC class translation factor GTPase superfamily. Classic translation factor GTPase family. CysN/NodQ subfamily. Heterodimer composed of CysD, the smaller subunit, and CysN.

The catalysed reaction is sulfate + ATP + H(+) = adenosine 5'-phosphosulfate + diphosphate. Its pathway is sulfur metabolism; hydrogen sulfide biosynthesis; sulfite from sulfate: step 1/3. In terms of biological role, with CysD forms the ATP sulfurylase (ATPS) that catalyzes the adenylation of sulfate producing adenosine 5'-phosphosulfate (APS) and diphosphate, the first enzymatic step in sulfur assimilation pathway. APS synthesis involves the formation of a high-energy phosphoric-sulfuric acid anhydride bond driven by GTP hydrolysis by CysN coupled to ATP hydrolysis by CysD. The chain is Sulfate adenylyltransferase subunit 1 from Escherichia coli (strain UTI89 / UPEC).